A 536-amino-acid chain; its full sequence is MSDIGVYNAAFGPDRAGLRNLKRVFWNLEAPSLYEQALQRGEAQLAAGGALVAETGIHTGRSPKDKFVVRDSGTEDQVWWDNNGAITAEQFDRLHADFVAHAEGKDLFAQDLYGGAEPAYRVRARVYTEYAWHSLFIRNLLIRPERDALGAYEPDLTIIDLPSFKADPARHGVRSETVIACDFTRKIVLIGGSSYAGEMKKSVFTYLNYILPKAGVMPMHCSANVGAQGDSALFFGLSGTGKTTLSNDPARVLLGDDEHGWGPKGIFNFEGGCYAKTIRLSREAEPEIYATTERFGTVMENVVIDPVTRLPDFDDASKTENTRCAYPLPFIPNASATGRAGHPKNIVMLTCDAFGVLPPIAKLTGAEAMYHFLSGYTAKVAGTEKGLKGPEATFSTCFGAPFMPRHPSVYGNLLRDLIARHHVDCWLVNTGWTGGGVGTGRRMPIRVTRRLLTAALDGSLAKADYRRDPYFGFAVPTSVPGVEPHILYPVKTWADKAAFAETAKRLVEMFQANFKRFEAHVDADVRAAEPTMSIAA.

Substrate contacts are provided by R61, Y195, and K201. Residues K201, H220, and G236–T244 each bind ATP. K201 and H220 together coordinate Mn(2+). Residue D257 coordinates Mn(2+). ATP contacts are provided by E285, R323, and T448. R323 contributes to the substrate binding site.

This sequence belongs to the phosphoenolpyruvate carboxykinase (ATP) family. Requires Mn(2+) as cofactor.

It is found in the cytoplasm. It carries out the reaction oxaloacetate + ATP = phosphoenolpyruvate + ADP + CO2. The protein operates within carbohydrate biosynthesis; gluconeogenesis. Functionally, involved in the gluconeogenesis. Catalyzes the conversion of oxaloacetate (OAA) to phosphoenolpyruvate (PEP) through direct phosphoryl transfer between the nucleoside triphosphate and OAA. In Methylobacterium sp. (strain 4-46), this protein is Phosphoenolpyruvate carboxykinase (ATP).